Consider the following 357-residue polypeptide: tRNA-specific 2-thiouridylase MnmA (357 aa).

ATP is bound by residues 7 to 14 and methionine 33; that span reads GMSGGVDS. The active-site Nucleophile is the cysteine 103. The cysteines at positions 103 and 200 are disulfide-linked. Glycine 127 is an ATP binding site. The segment at 150 to 152 is interaction with tRNA; sequence KDQ. Cysteine 200 functions as the Cysteine persulfide intermediate in the catalytic mechanism. The tract at residues 306-307 is interaction with tRNA; that stretch reads RY.

The protein belongs to the MnmA/TRMU family.

The protein localises to the cytoplasm. It catalyses the reaction S-sulfanyl-L-cysteinyl-[protein] + uridine(34) in tRNA + AH2 + ATP = 2-thiouridine(34) in tRNA + L-cysteinyl-[protein] + A + AMP + diphosphate + H(+). In terms of biological role, catalyzes the 2-thiolation of uridine at the wobble position (U34) of tRNA, leading to the formation of s(2)U34. The chain is tRNA-specific 2-thiouridylase MnmA from Lachnoclostridium phytofermentans (strain ATCC 700394 / DSM 18823 / ISDg) (Clostridium phytofermentans).